Reading from the N-terminus, the 598-residue chain is Centrosomal protein of 70 kDa (598 aa).

Over residues 16-38 the composition is skewed to polar residues; the sequence is DSTKEPLSTVTSQAQDSSLSANR. Positions 16-43 are disordered; it reads DSTKEPLSTVTSQAQDSSLSANRPVTEK. Coiled coils occupy residues 99-210 and 255-317; these read TRQQ…EEDR and TYKG…NIKL. Residues 484–517 form a TPR repeat; sequence NGVYPRMNEVYARLGEMNNAVRNLQELLGLDSSS.

Directly interacts with tubulin-gamma; this interaction determines centrosomal localization.

It is found in the cytoplasm. Its subcellular location is the cytoskeleton. The protein localises to the microtubule organizing center. The protein resides in the centrosome. Its function is as follows. Plays a role in the organization of both preexisting and nascent microtubules in interphase cells. During mitosis, required for the organization and orientation of the mitotic spindle. In Rattus norvegicus (Rat), this protein is Centrosomal protein of 70 kDa (Cep70).